Consider the following 284-residue polypeptide: Nucleoid occlusion protein (284 aa).

A DNA-binding region (H-T-H motif) is located at residues 143-162 (EALAQRVGKSQSAIANKMRL).

The protein belongs to the ParB family.

The protein localises to the cytoplasm. The protein resides in the nucleoid. Effects nucleoid occlusion by binding relatively nonspecifically to DNA and preventing the assembly of the division machinery in the vicinity of the nucleoid, especially under conditions that disturb the cell cycle. It helps to coordinate cell division and chromosome segregation by preventing the formation of the Z ring through the nucleoid, which would cause chromosome breakage. This is Nucleoid occlusion protein from Listeria monocytogenes serotype 4b (strain CLIP80459).